Consider the following 281-residue polypeptide: 3-hydroxybutyryl-CoA dehydrogenase (281 aa).

This sequence belongs to the 3-hydroxyacyl-CoA dehydrogenase family.

The enzyme catalyses (3S)-3-hydroxybutanoyl-CoA + NADP(+) = acetoacetyl-CoA + NADPH + H(+). It participates in lipid metabolism; butanoate metabolism. The polypeptide is 3-hydroxybutyryl-CoA dehydrogenase (hbd) (Clostridioides difficile (Peptoclostridium difficile)).